Reading from the N-terminus, the 522-residue chain is Cytochrome P450 monooxygenase FGSG_08207 (522 aa).

A helical transmembrane segment spans residues leucine 10 to glycine 30. 2 N-linked (GlcNAc...) asparagine glycosylation sites follow: asparagine 104 and asparagine 155. Cysteine 441 lines the heme pocket.

It belongs to the cytochrome P450 family. Heme serves as cofactor.

Its subcellular location is the membrane. It participates in secondary metabolite biosynthesis. Its function is as follows. Cytochrome P450 monooxygenase; part of the gene cluster that mediates the biosynthesis of the lipopeptide fusaristatin A. Fusaristatin A consists of a polyketide chain linked to three amino acid residues glutamine (Gln), dehydroalanine (dehydro-Ala), and beta-aminoisobutyric acid. The biosynthesis starts with formation of a linear polyketide chain by the highly reducing polyketide synthase PKS6. The gene cluster does not contain an acyl-CoA ligase or an acyl-transferase, and it is therefore predicted that the polyketide is transferred directly to the nonribosomal peptide synthetase NRPS7. Modules 1-3 from NRPS7 incorporate dehydro-Ala, Gln, and beta-aminoisobutyric acid in the compound, which is released by cyclization. The beta-aminoisobutyric acid units are most likely not freely available to the NRPS, but can be synthesized from thymine, which requires a dehydrogenase, a monooxygenase, and an aminotransferase. The fusaristatin A cluster contains a cytochrome P450 monooxygenase (FGSG_08207) and an aminotransferase (FGSG_17085), which theoretically can perform two of the enzymatic steps. The enzymes may however also be involved in biosynthesis of dehydroalanine or modification of the polyketide. The dehydro-Ala residue can be a result of cyclization, where serine is dehydrated. The last gene of the cluster encodes a protein with an A/B barrel domain found in variable enzymes, which hampers functional prediction. The polypeptide is Cytochrome P450 monooxygenase FGSG_08207 (Gibberella zeae (strain ATCC MYA-4620 / CBS 123657 / FGSC 9075 / NRRL 31084 / PH-1) (Wheat head blight fungus)).